The primary structure comprises 154 residues: Deoxyuridine 5'-triphosphate nucleotidohydrolase (154 aa).

Substrate-binding positions include 64 to 66 (RSG), Asn77, 81 to 83 (TVD), and Lys91.

Belongs to the dUTPase family. Homotrimer. Requires Mg(2+) as cofactor.

The catalysed reaction is dUTP + H2O = dUMP + diphosphate + H(+). Its pathway is pyrimidine metabolism; dUMP biosynthesis; dUMP from dCTP (dUTP route): step 2/2. Its function is as follows. This enzyme is involved in nucleotide metabolism: it produces dUMP, the immediate precursor of thymidine nucleotides and it decreases the intracellular concentration of dUTP so that uracil cannot be incorporated into DNA. The chain is Deoxyuridine 5'-triphosphate nucleotidohydrolase from Mycolicibacterium gilvum (strain PYR-GCK) (Mycobacterium gilvum (strain PYR-GCK)).